Here is a 266-residue protein sequence, read N- to C-terminus: L-aspartate dehydrogenase (266 aa).

NAD(+)-binding residues include Ala123 and Asn189. His219 is an active-site residue.

Belongs to the L-aspartate dehydrogenase family.

The enzyme catalyses L-aspartate + NADP(+) + H2O = oxaloacetate + NH4(+) + NADPH + H(+). It catalyses the reaction L-aspartate + NAD(+) + H2O = oxaloacetate + NH4(+) + NADH + H(+). It functions in the pathway cofactor biosynthesis; NAD(+) biosynthesis; iminoaspartate from L-aspartate (dehydrogenase route): step 1/1. Functionally, specifically catalyzes the NAD or NADP-dependent dehydrogenation of L-aspartate to iminoaspartate. This chain is L-aspartate dehydrogenase, found in Cupriavidus necator (strain ATCC 17699 / DSM 428 / KCTC 22496 / NCIMB 10442 / H16 / Stanier 337) (Ralstonia eutropha).